A 790-amino-acid polypeptide reads, in one-letter code: MYKSLFFCLKIFAVLILVGCGITAYIIYHYSRDLPDYSQLARYYPPSVTRIYSHDGKLMEEYAFERRVFVPINSIPSSLIESFIAAEDKNFYNHPGVDLLGIVRAAFLNISNYLHHRRMEGASTITQQVVKNFLLTNEVSLERKIKEAILSYMISRVFTKEQILELYLNQTFFGRGAYGVAAAAQNYFNKSVEELTIAESAFIAALPKAPSELNPERNYARVKARRDYVIARMFEDGYITKDAAKEAMDSPIVLRKRAKEETVTADYYAAQVREEVIRMLNSKEEFYTGGLTIITSLDAKMQQLAENSLRKGLREFDRRRGFRKPIANIPLDNWQEEIKKLPSPPSLLEYKLAVVLDVADNHAEIGLIDGSKSKILIAEMKWARSNLKSVKTLLKKGDVIVVEPIKDGYALRQIPEVNGAIMVMNPNTGQVLASVGGYDFSTSKFDRVTQALRQPGSLSKTFVYLAALENGIKPNQIFNDGPIEISQGPGMPSWRPKNYEGKFLGEITMRTGLEKSCNLITVRVATAVGLTKIVDIIKRFGINNEPKKVYSMVLGSIETTLSRMTNAYAIIANGGKKVEPHFVELIKDRNGKIIYRRDNRECLSCNVSDSNLDIAILEIPKEDIYRVTDEASDYQITSFLTGAIDRSTGYAAKKLGKIIGGKTGTSNDSKDTWFVGFTPKIVVGSYVGYDTPKELGKRATGSNVVLPIFIDFMSNAYKDEPSLPFKVPDSIKLIAVDRATGKITPSGTVIEAFKVNNIQMLENEDMIDNRDNNDIFDYVPSKEDQSQEIY.

Over 1–6 (MYKSLF) the chain is Cytoplasmic. Residues 7 to 27 (FCLKIFAVLILVGCGITAYII) traverse the membrane as a helical; Signal-anchor for type II membrane protein segment. Residues 28–790 (YHYSRDLPDY…SKEDQSQEIY (763 aa)) are Periplasmic-facing. Residues 49 to 220 (TRIYSHDGKL…SELNPERNYA (172 aa)) are transglycosylase. The active-site Proton donor; for transglycosylase activity is glutamate 87. The tract at residues 398–711 (DVIVVEPIKD…SNVVLPIFID (314 aa)) is transpeptidase. Serine 457 serves as the catalytic Acyl-ester intermediate; for transpeptidase activity.

This sequence in the N-terminal section; belongs to the glycosyltransferase 51 family. The protein in the C-terminal section; belongs to the transpeptidase family.

It localises to the cell inner membrane. It carries out the reaction [GlcNAc-(1-&gt;4)-Mur2Ac(oyl-L-Ala-gamma-D-Glu-L-Lys-D-Ala-D-Ala)](n)-di-trans,octa-cis-undecaprenyl diphosphate + beta-D-GlcNAc-(1-&gt;4)-Mur2Ac(oyl-L-Ala-gamma-D-Glu-L-Lys-D-Ala-D-Ala)-di-trans,octa-cis-undecaprenyl diphosphate = [GlcNAc-(1-&gt;4)-Mur2Ac(oyl-L-Ala-gamma-D-Glu-L-Lys-D-Ala-D-Ala)](n+1)-di-trans,octa-cis-undecaprenyl diphosphate + di-trans,octa-cis-undecaprenyl diphosphate + H(+). The enzyme catalyses Preferential cleavage: (Ac)2-L-Lys-D-Ala-|-D-Ala. Also transpeptidation of peptidyl-alanyl moieties that are N-acyl substituents of D-alanine.. Its pathway is cell wall biogenesis; peptidoglycan biosynthesis. Cell wall formation. Synthesis of cross-linked peptidoglycan from the lipid intermediates. The enzyme has a penicillin-insensitive transglycosylase N-terminal domain (formation of linear glycan strands) and a penicillin-sensitive transpeptidase C-terminal domain (cross-linking of the peptide subunits). The chain is Penicillin-binding protein 1A (mrcA) from Rickettsia felis (strain ATCC VR-1525 / URRWXCal2) (Rickettsia azadi).